Here is a 152-residue protein sequence, read N- to C-terminus: Methylglyoxal synthase (152 aa).

The MGS-like domain maps to 6-152 (RTMATAKNIA…YQHYLNGRLK (147 aa)). Residues His19, Lys23, 45 to 48 (TGTT), and 65 to 66 (SG) each bind substrate. Asp71 (proton donor/acceptor) is an active-site residue. His98 lines the substrate pocket.

This sequence belongs to the methylglyoxal synthase family.

The enzyme catalyses dihydroxyacetone phosphate = methylglyoxal + phosphate. In terms of biological role, catalyzes the formation of methylglyoxal from dihydroxyacetone phosphate. The chain is Methylglyoxal synthase from Photorhabdus laumondii subsp. laumondii (strain DSM 15139 / CIP 105565 / TT01) (Photorhabdus luminescens subsp. laumondii).